We begin with the raw amino-acid sequence, 421 residues long: Acyl-coenzyme A thioesterase 5 (421 aa).

Catalysis depends on charge relay system residues serine 232, aspartate 326, and histidine 360. The Microbody targeting signal signature appears at 419–421 (AKL).

It belongs to the C/M/P thioester hydrolase family. Highly expressed in spleen, brain, testis and proximal and distal intestine; expressed at low level in the liver.

It localises to the peroxisome. It carries out the reaction hexadecanoyl-CoA + H2O = hexadecanoate + CoA + H(+). The catalysed reaction is decanoyl-CoA + H2O = decanoate + CoA + H(+). It catalyses the reaction octanoyl-CoA + H2O = octanoate + CoA + H(+). The enzyme catalyses dodecanoyl-CoA + H2O = dodecanoate + CoA + H(+). It carries out the reaction tetradecanoyl-CoA + H2O = tetradecanoate + CoA + H(+). The catalysed reaction is octadecanoyl-CoA + H2O = octadecanoate + CoA + H(+). It catalyses the reaction eicosanoyl-CoA + H2O = eicosanoate + CoA + H(+). The enzyme catalyses (9Z)-octadecenoyl-CoA + H2O = (9Z)-octadecenoate + CoA + H(+). It carries out the reaction (9Z,12Z)-octadecadienoyl-CoA + H2O = (9Z,12Z)-octadecadienoate + CoA + H(+). The catalysed reaction is (5Z,8Z,11Z,14Z)-eicosatetraenoyl-CoA + H2O = (5Z,8Z,11Z,14Z)-eicosatetraenoate + CoA + H(+). It catalyses the reaction (9Z)-hexadecenoyl-CoA + H2O = (9Z)-hexadecenoate + CoA + H(+). It functions in the pathway lipid metabolism; fatty acid metabolism. In terms of biological role, catalyzes the hydrolysis of acyl-CoAs into free fatty acids and coenzyme A (CoASH), regulating their respective intracellular levels. Mainly active on medium-chain acyl-CoAs. Seems to be involved in intraperoxisomal regulation of acyl-CoA levels, but not CoASH levels. May have a function in termination of beta-oxidation of fatty acids. This chain is Acyl-coenzyme A thioesterase 5 (Acot5), found in Mus musculus (Mouse).